The chain runs to 142 residues: Baculoviral IAP repeat-containing protein 5 (142 aa).

The BIR repeat unit spans residues 18–88 (RISTFKNWPF…KHSSGCAFLS (71 aa)). Ser20 is modified (phosphoserine; by AURKC). Residue Lys23 is modified to N6-acetyllysine. Residue Thr34 is modified to Phosphothreonine; by CDK1 and CDK15. Position 48 is a phosphothreonine (Thr48). Cys57, Cys60, His77, and Cys84 together coordinate Zn(2+). Residues Lys90, Lys110, Lys112, and Lys115 each carry the N6-acetyllysine modification. Thr117 bears the Phosphothreonine; by AURKB mark. Lys129 carries the N6-acetyllysine modification.

Belongs to the IAP family. Monomer or homodimer. Exists as a homodimer in the apo state and as a monomer in the CPC-bound state. The monomer protects cells against apoptosis more efficiently than the dimer. Only the dimeric form is capable of enhancing tubulin stability in cells. When phosphorylated, interacts with LAMTOR5/HBXIP; the resulting complex binds pro-CASP9, as well as active CASP9, but much less efficiently. Component of the chromosomal passenger complex (CPC) composed of at least BIRC5/survivin, CDCA8/borealin, INCENP, AURKB or AURKC; in the complex forms a triple-helix bundle-based subcomplex with INCENP and CDCA8. Interacts with JTB. Interacts (via BIR domain) with histone H3 phosphorylated at 'Thr-3' (H3pT3). Interacts with EVI5. Interacts with GTP-bound RAN in both the S and M phases of the cell cycle. Interacts with USP9X. Interacts with tubulin. Interacts with BIRC2/c-IAP1. The acetylated form at Lys-129 interacts with STAT3. The monomeric form deacetylated at Lys-129 interacts with XPO1/CRM1. The monomeric form interacts with XIAP/BIRC4. Both the dimeric and monomeric form can interact with DIABLO/SMAC. Interacts with BIRC6/bruce. Interacts with FBXL7; this interaction facilitates the polyubiquitination and subsequent proteasomal degradation of BIRC5 by the SCF(FBXL7) E3 ubiquitin-protein ligase complex. In terms of processing, ubiquitinated by the Cul9-RING ubiquitin-protein ligase complex, leading to its degradation. Ubiquitination is required for centrosomal targeting. Deubiquitinated by USP35 or USP38; leading to stabilization. Acetylation at Lys-129 results in its homodimerization, while deacetylation promotes the formation of monomers which heterodimerize with XPO1/CRM1 which facilitates its nuclear export. The acetylated form represses STAT3 transactivation. The dynamic equilibrium between its acetylation and deacetylation at Lys-129 determines its interaction with XPO1/CRM1, its subsequent subcellular localization, and its ability to inhibit STAT3 transactivation. Post-translationally, in vitro phosphorylation at Thr-117 by AURKB prevents interaction with INCENP and localization to mitotic chromosomes. Phosphorylation at Thr-48 by CK2 is critical for its mitotic and anti-apoptotic activities. Phosphorylation at Thr-34 by CDK15 is critical for its anti-apoptotic activity. Phosphorylation at Ser-20 by AURKC is critical for regulation of proper chromosome alignment and segregation, and possibly cytokinesis.

Its subcellular location is the cytoplasm. The protein localises to the nucleus. The protein resides in the chromosome. It is found in the centromere. It localises to the cytoskeleton. Its subcellular location is the spindle. The protein localises to the kinetochore. The protein resides in the midbody. Its function is as follows. Multitasking protein that has dual roles in promoting cell proliferation and preventing apoptosis. Component of a chromosome passage protein complex (CPC) which is essential for chromosome alignment and segregation during mitosis and cytokinesis. Acts as an important regulator of the localization of this complex; directs CPC movement to different locations from the inner centromere during prometaphase to midbody during cytokinesis and participates in the organization of the center spindle by associating with polymerized microtubules. Involved in the recruitment of CPC to centromeres during early mitosis via association with histone H3 phosphorylated at 'Thr-3' (H3pT3) during mitosis. The complex with RAN plays a role in mitotic spindle formation by serving as a physical scaffold to help deliver the RAN effector molecule TPX2 to microtubules. May counteract a default induction of apoptosis in G2/M phase. The acetylated form represses STAT3 transactivation of target gene promoters. May play a role in neoplasia. Inhibitor of CASP3 and CASP7. Essential for the maintenance of mitochondrial integrity and function. The protein is Baculoviral IAP repeat-containing protein 5 (BIRC5) of Sus scrofa (Pig).